We begin with the raw amino-acid sequence, 543 residues long: CTP synthase (543 aa).

Positions 1 to 265 are amidoligase domain; it reads MTRFVFITGG…DQEVLRYFDL (265 aa). S13 lines the CTP pocket. A UTP-binding site is contributed by S13. 14–19 lines the ATP pocket; sequence SLGKGI. Position 54 (Y54) interacts with L-glutamine. D71 is an ATP binding site. Mg(2+)-binding residues include D71 and E139. CTP-binding positions include 146 to 148, 186 to 191, and K222; these read DIE and KTKPTQ. UTP-binding positions include 186–191 and K222; that span reads KTKPTQ. A Glutamine amidotransferase type-1 domain is found at 291 to 542; sequence RVAIVGKYTA…IAAAVKEAHR (252 aa). G354 contributes to the L-glutamine binding site. C381 functions as the Nucleophile; for glutamine hydrolysis in the catalytic mechanism. L-glutamine contacts are provided by residues 382 to 385, E405, and R470; that span reads FGMQ. Residues H515 and E517 contribute to the active site.

Belongs to the CTP synthase family. Homotetramer.

The catalysed reaction is UTP + L-glutamine + ATP + H2O = CTP + L-glutamate + ADP + phosphate + 2 H(+). It carries out the reaction L-glutamine + H2O = L-glutamate + NH4(+). The enzyme catalyses UTP + NH4(+) + ATP = CTP + ADP + phosphate + 2 H(+). It participates in pyrimidine metabolism; CTP biosynthesis via de novo pathway; CTP from UDP: step 2/2. With respect to regulation, allosterically activated by GTP, when glutamine is the substrate; GTP has no effect on the reaction when ammonia is the substrate. The allosteric effector GTP functions by stabilizing the protein conformation that binds the tetrahedral intermediate(s) formed during glutamine hydrolysis. Inhibited by the product CTP, via allosteric rather than competitive inhibition. Catalyzes the ATP-dependent amination of UTP to CTP with either L-glutamine or ammonia as the source of nitrogen. Regulates intracellular CTP levels through interactions with the four ribonucleotide triphosphates. The chain is CTP synthase from Gluconobacter oxydans (strain 621H) (Gluconobacter suboxydans).